We begin with the raw amino-acid sequence, 201 residues long: MAKRVTGPEIEKLIQLLAKVPGLGPRSARRAALHLIKKKEQLLGPLGHAMGEAYDKVKICSCCGNVDTIDPCTVCADDRRDQSVIIVVEDVSDLWALERAGAMNTAYHVLGGTLSPLDGVGPEDLNIKGLIDRVSAGGIRELIIAVNATVEGQATAHYITDRLSGLGIKITRLAHGVPVGGELDYLDEGTLTAALRARTTI.

Residues 60–75 (CSCCGNVDTIDPCTVC) form a C4-type zinc finger. Residues 83 to 178 (SVIIVVEDVS…KITRLAHGVP (96 aa)) form the Toprim domain.

The protein belongs to the RecR family.

Functionally, may play a role in DNA repair. It seems to be involved in an RecBC-independent recombinational process of DNA repair. It may act with RecF and RecO. The polypeptide is Recombination protein RecR (Agrobacterium fabrum (strain C58 / ATCC 33970) (Agrobacterium tumefaciens (strain C58))).